Reading from the N-terminus, the 354-residue chain is Cyclin-D1-2 (354 aa).

Disordered stretches follow at residues 37–74 (FFQQ…EEEE) and 331–354 (TTAT…RRKM). 2 stretches are compositionally biased toward low complexity: residues 44–66 (PAPA…AGSC) and 331–346 (TTAT…VSSS).

This sequence belongs to the cyclin family. Cyclin D subfamily.

The sequence is that of Cyclin-D1-2 (CYCD1-2) from Oryza sativa subsp. japonica (Rice).